Here is a 534-residue protein sequence, read N- to C-terminus: CAP-Gly domain-containing linker protein 3 (534 aa).

Basic and acidic residues predominate over residues 1–16 (MTREDLPDSTPEESKL). Residues 1-33 (MTREDLPDSTPEESKLPMEFQSPLLEKRRRPVV) form a disordered region. ANK repeat units lie at residues 107–148 (TDMT…LRSR), 150–173 (TNMN…LLKA), and 187–299 (NHGT…KAGT). The CAP-Gly 1 domain occupies 304–346 (GTTEFASGQWVGVELDEPDGKNDGSVGGIRYFICPPKQGIFAP). The interval 349 to 391 (KISKAPDQPPSSVTSTPRTPRVDFSRVTGKGRKEKKATHKKSL) is disordered. Positions 358 to 367 (PSSVTSTPRT) are enriched in low complexity. Positions 377 to 390 (GKGRKEKKATHKKS) are enriched in basic residues. In terms of domain architecture, CAP-Gly 2 spans 423-465 (GKTDFAPGYWFGIELEKPTGKHDGSVFGVRYFTCSAKNGVFAP). The interval 475 to 534 (PKDPQTDNNDMKKVHQVTMTQPKRNFTKVRTPKEIASENSMSRILFCCWFPWLLRAEMKS) is goLD.

As to quaternary structure, homodimer.

It localises to the cytoplasm. Its subcellular location is the golgi apparatus. The protein resides in the golgi stack. Functions as a cytoplasmic linker protein. Involved in TGN-endosome dynamics. This is CAP-Gly domain-containing linker protein 3 (clip3) from Xenopus laevis (African clawed frog).